The primary structure comprises 188 residues: dCTP deaminase (188 aa).

Residues Lys-111–Arg-116, Thr-135–Glu-137, Gln-156, Tyr-170, and Gln-180 contribute to the dCTP site. The active-site Proton donor/acceptor is the Glu-137.

This sequence belongs to the dCTP deaminase family. As to quaternary structure, homotrimer.

It catalyses the reaction dCTP + H2O + H(+) = dUTP + NH4(+). It functions in the pathway pyrimidine metabolism; dUMP biosynthesis; dUMP from dCTP (dUTP route): step 1/2. Catalyzes the deamination of dCTP to dUTP. This is dCTP deaminase from Pseudomonas putida (strain GB-1).